Consider the following 786-residue polypeptide: Pentatricopeptide repeat-containing protein 10, chloroplastic (786 aa).

The tract at residues 1 to 71 (MEATGRGLFP…HQTPTPPHSF (71 aa)) is disordered. The N-terminal 95 residues, 1 to 95 (MEATGRGLFP…HPLPTLAAFL (95 aa)), are a transit peptide targeting the chloroplast. Over residues 27–36 (PAAPPPPSPS) the composition is skewed to pro residues. A compositionally biased stretch (low complexity) spans 37 to 50 (SLPLDSLLLHLTAP). PPR repeat units lie at residues 137 to 167 (DASA…TPLP), 173 to 207 (DVRA…GVAP), 208 to 243 (TLVT…GVEP), 244 to 278 (DGFT…GHAP), 279 to 313 (CVVT…GCQP), 314 to 348 (DAVT…GLLP), 349 to 383 (NAFT…GFVP), 384 to 418 (NVNT…GCTP), 419 to 453 (NRVT…GVEL), 454 to 488 (SRDT…GFTP), 489 to 523 (CITT…GFKP), 524 to 558 (NEQS…GAVF), 560 to 594 (SWVI…GYNP), 595 to 629 (DLVI…GLSP), 630 to 664 (DLIT…QTMK), 666 to 700 (DVVS…GMAP), 701 to 735 (CAVT…GLKP), and 736 to 770 (MELT…DLDF).

It belongs to the PPR family. P subfamily. As to quaternary structure, forms homodimers.

It is found in the plastid. Its subcellular location is the chloroplast stroma. Its function is as follows. Involved in chloroplast mRNA stability. Binds specifically to two intergenic RNA regions of similar sequence located in the chloroplast atpH 5'-UTR and psaJ 3'-UTR, and serves as a barrier to RNA decay. Binding to a specific site in the intergenic region of the chloroplast atpH is sufficient to block 5'-3' and 3'-5' exonucleases. Acts as a protein barrier to block mRNA degradation by exonucleases, and defines processed mRNA termini in chloroplasts. Remodels the structure of the atpH ribosome-binding site in a manner that can account for its ability to enhance translation. Stabilizes a RNA 3'-end downstream from psaI. Binds atpH RNA as a monomer. The chain is Pentatricopeptide repeat-containing protein 10, chloroplastic from Zea mays (Maize).